The chain runs to 643 residues: Phosphatidylinositol-3,5-bisphosphate 3-phosphatase MTMR2 (643 aa).

Polar residues-rich tracts occupy residues 1–12 (MEKSSSCESLGS) and 23–40 (DSLS…VHTK). Residues 1-56 (MEKSSSCESLGSQPAAARPPSVDSLSSASTSHSENSVHTKSASVVSSDSISTSADN) are disordered. 2 positions are modified to phosphoserine: serine 6 and serine 9. Over residues 41–55 (SASVVSSDSISTSAD) the composition is skewed to low complexity. Phosphoserine is present on serine 58. The GRAM domain maps to 68-139 (NKLAEMEEPP…GVINRVEKIG (72 aa)). Residues 205 to 580 (GWKLYDPLLE…RHLELWVGYY (376 aa)) enclose the Myotubularin phosphatase domain. Positions 330, 355, and 356 each coordinate a 1,2-diacyl-sn-glycero-3-phospho-(1D-myo-inositol-3,5-bisphosphate). The a 1,2-diacyl-sn-glycero-3-phospho-(1D-myo-inositol-3-phosphate) site is built by asparagine 330, asparagine 355, and isoleucine 356. Cysteine 417 serves as the catalytic Phosphocysteine intermediate. A 1,2-diacyl-sn-glycero-3-phospho-(1D-myo-inositol-3,5-bisphosphate) is bound by residues serine 418, aspartate 419, glycine 420, tryptophan 421, aspartate 422, arginine 423, arginine 459, and arginine 463. Residues serine 418, aspartate 419, glycine 420, tryptophan 421, aspartate 422, and arginine 423 each contribute to the a 1,2-diacyl-sn-glycero-3-phospho-(1D-myo-inositol-3-phosphate) site. Arginine 463 contacts a 1,2-diacyl-sn-glycero-3-phospho-(1D-myo-inositol-3-phosphate). Positions 593-627 (IHNRYKELLAKRAELQKKVEELQREISNRSTSSSE) form a coiled coil. Positions 615 to 643 (QREISNRSTSSSERASSPAQCVTPVQTVV) are disordered. Over residues 620 to 631 (NRSTSSSERASS) the composition is skewed to low complexity. Polar residues predominate over residues 632–643 (PAQCVTPVQTVV).

Belongs to the protein-tyrosine phosphatase family. Non-receptor class myotubularin subfamily. In terms of assembly, homodimer (via coiled-coil domain). Heterotetramer consisting of one MTMR2 dimer and one SBF2/MTMR13 dimer; specifically in peripheral nerves stabilizes SBF2/MTMR13 at the membranes and increases MTMR2 catalytic activity towards phosphatidylinositol 3,5-bisphosphate and to a lesser extent towards phosphatidylinositol 3-phosphate. Heterodimer with SBF1/MTMR5; acts as an adapter for the phosphatase MTMR2 to regulate MTMR2 catalytic activity and subcellular location. Heterodimer with MTMR12. In terms of processing, phosphorylation at Ser-58 decreases MTMR2 localization to endocytic vesicular structures.

The protein localises to the cytoplasm. It localises to the early endosome membrane. It is found in the perinuclear region. Its subcellular location is the cell projection. The protein resides in the axon. The protein localises to the endosome membrane. The catalysed reaction is a 1,2-diacyl-sn-glycero-3-phospho-(1D-myo-inositol-3,5-bisphosphate) + H2O = a 1,2-diacyl-sn-glycero-3-phospho-(1D-myo-inositol-5-phosphate) + phosphate. It catalyses the reaction a 1,2-diacyl-sn-glycero-3-phospho-(1D-myo-inositol-3-phosphate) + H2O = a 1,2-diacyl-sn-glycero-3-phospho-(1D-myo-inositol) + phosphate. The enzyme catalyses 1,2-dioctanoyl-sn-glycero-3-phospho-(1-D-myo-inositol-3-phosphate) + H2O = 1,2-dioctanoyl-sn-glycero-3-phospho-(1D-myo-inositol) + phosphate. It carries out the reaction 1,2-dioctanoyl-sn-glycero-3-phospho-(1D-myo-inositol-3,5-bisphosphate) + H2O = 1,2-dioctanoyl-sn-glycero-3-phospho-(1D-myo-inositol-5-phosphate) + phosphate. Functionally, lipid phosphatase that specifically dephosphorylates the D-3 position of phosphatidylinositol 3-phosphate and phosphatidylinositol 3,5-bisphosphate, generating phosphatidylinositol and phosphatidylinositol 5-phosphate. Regulates the level of these phosphoinositides critical for various biological processes including autophagy initiation and autophagosome maturation. This is Phosphatidylinositol-3,5-bisphosphate 3-phosphatase MTMR2 from Pongo abelii (Sumatran orangutan).